Consider the following 122-residue polypeptide: Large ribosomal subunit protein uL22 (122 aa).

It belongs to the universal ribosomal protein uL22 family. Part of the 50S ribosomal subunit.

Functionally, this protein binds specifically to 23S rRNA; its binding is stimulated by other ribosomal proteins, e.g. L4, L17, and L20. It is important during the early stages of 50S assembly. It makes multiple contacts with different domains of the 23S rRNA in the assembled 50S subunit and ribosome. Its function is as follows. The globular domain of the protein is located near the polypeptide exit tunnel on the outside of the subunit, while an extended beta-hairpin is found that lines the wall of the exit tunnel in the center of the 70S ribosome. The chain is Large ribosomal subunit protein uL22 from Caldicellulosiruptor saccharolyticus (strain ATCC 43494 / DSM 8903 / Tp8T 6331).